We begin with the raw amino-acid sequence, 959 residues long: Mitogen-activated protein kinase kinase kinase 13 (959 aa).

Residues 1-47 (MANPQEHLSCSSLPHLPLTENKTSGGRNELAAMGNHPSPKLPEDPQE) are disordered. Residues 7–18 (HLSCSSLPHLPL) are compositionally biased toward low complexity. In terms of domain architecture, Protein kinase spans 167–408 (ISELQWLGSG…FRQTLMHLDI (242 aa)). Residues 173–181 (LGSGAQGAV) and Lys194 each bind ATP. Asp278 acts as the Proton acceptor in catalysis. Leucine-zipper regions lie at residues 432 to 453 (VKKH…DEEL) and 485 to 506 (LSAI…EQAV). Disordered stretches follow at residues 533 to 599 (KRKG…GSHS), 739 to 828 (GSLD…RQRP), 842 to 902 (SSEN…LSDK), and 927 to 959 (NPVQ…SATW). Residues 566 to 577 (SPLSGSPKMSTA) show a composition bias toward polar residues. Over residues 581 to 593 (SRYRSKPRHRRGN) the composition is skewed to basic residues. Polar residues-rich tracts occupy residues 754–774 (DLSS…SERT) and 780–790 (SGCQSGISHQF). A compositionally biased stretch (acidic residues) spans 808–820 (DSSEEEGEVDSEV). The segment covering 866–876 (SANRRQDRLAE) has biased composition (basic and acidic residues). The segment covering 934–943 (SDCDSSEGEC) has biased composition (acidic residues). Residues 947 to 959 (TVRTSKNYSSATW) show a composition bias toward polar residues.

This sequence belongs to the protein kinase superfamily. STE Ser/Thr protein kinase family. MAP kinase kinase kinase subfamily. As to quaternary structure, homodimer; forms dimers through the leucine-zipper motif. Interacts with the C-terminus of MAPK8IP1 through the kinase catalytic domain. Binds PRDX3. Associates with the IKK complex through the kinase domain. It depends on Mg(2+) as a cofactor. In terms of processing, autophosphorylated on serine and threonine residues.

It localises to the cytoplasm. It is found in the membrane. It catalyses the reaction L-seryl-[protein] + ATP = O-phospho-L-seryl-[protein] + ADP + H(+). It carries out the reaction L-threonyl-[protein] + ATP = O-phospho-L-threonyl-[protein] + ADP + H(+). Its activity is regulated as follows. Activated by autophosphorylation and homodimerization. Activates the JUN N-terminal pathway through activation of the MAP kinase kinase MAP2K7. Acts synergistically with PRDX3 to regulate the activation of NF-kappa-B in the cytosol. This activation is kinase-dependent and involves activating the IKK complex, the IKBKB-containing complex that phosphorylates inhibitors of NF-kappa-B. This Mus musculus (Mouse) protein is Mitogen-activated protein kinase kinase kinase 13 (Map3k13).